An 867-amino-acid polypeptide reads, in one-letter code: Probable potassium transporter 15 (867 aa).

The segment covering 1-13 (MAASSSSSASASA) has biased composition (low complexity). The disordered stretch occupies residues 1–88 (MAASSSSSAS…EGEGEDGEKQ (88 aa)). The Cytoplasmic portion of the chain corresponds to 1–124 (MAASSSSSAS…DSEEFDFGRT (124 aa)). Positions 32-44 (TEEDDEGEEDGDT) are enriched in acidic residues. Low complexity predominate over residues 45-54 (VEAAAAAVGA). Acidic residues predominate over residues 63-84 (SEEEEDEEDGGGGGEGEGEGED). A helical membrane pass occupies residues 125–145 (MFLALQTLAVVFGDIGISPLY). Residues 146–167 (TFDVMFSKYPILGEEDVLGALS) are Extracellular-facing. A helical transmembrane segment spans residues 168 to 188 (LVLYTLISMPLVKYVLVVLWA). Residues 189–252 (NDDGEGGIFA…KLESSLLLKK (64 aa)) are Cytoplasmic-facing. The helical transmembrane segment at 253-273 (LLLGLVLFGTAMFISNGVITP) threads the bilayer. The Extracellular segment spans residues 274 to 285 (AMSVLSAVSGLK). Residues 286–306 (VGIPNASQGLVVMISVVLLVI) traverse the membrane as a helical segment. The Cytoplasmic portion of the chain corresponds to 307–317 (LYSVQRYATSK). The chain crosses the membrane as a helical span at residues 318–338 (MGFALGPSLLIWFCCLGGIGI). The Extracellular segment spans residues 339–365 (YNLSTYGPAAFKAFNPLYIIYYFGRNP). The N-linked (GlcNAc...) asparagine glycan is linked to asparagine 340. A helical membrane pass occupies residues 366–386 (FQAWLSLAGCLLCATGSEAIF). Residues 387-400 (ANLSYFPVRYVQSM) lie on the Cytoplasmic side of the membrane. The helical transmembrane segment at 401–421 (FALLVLPCLVLAYLGQGAFLI) threads the bilayer. Residues 422 to 433 (ANQNSSEQIFFS) are Extracellular-facing. Asparagine 425 carries an N-linked (GlcNAc...) asparagine glycan. A helical transmembrane segment spans residues 434–454 (SIPSGVFWPVFLIANLAALIA). The Cytoplasmic segment spans residues 455–490 (SRTMTTAIFQCLKQSIALGCFPRLKIIHTSRKFMAK). Residues 491–511 (IYIPVVNWFLLFSCLGFILLF) form a helical membrane-spanning segment. Topologically, residues 512–522 (RSIYDVGNAYA) are extracellular. Residues 523–543 (IAELGVMIMATVYVTIIMLLI) form a helical membrane-spanning segment. At 544–545 (WE) the chain is on the cytoplasmic side. A helical membrane pass occupies residues 546–566 (TSIVKVLSFVITFLSLELVFF). The Extracellular portion of the chain corresponds to 567 to 572 (SSSLSS). A helical membrane pass occupies residues 573–593 (VGDGGWALIIFASGILMVMFI). Over 594-867 (WNYGSKLKYD…VMQVRLTSYV (274 aa)) the chain is Cytoplasmic.

Belongs to the HAK/KUP transporter (TC 2.A.72.3) family.

It localises to the membrane. In terms of biological role, high-affinity potassium transporter. This Oryza sativa subsp. japonica (Rice) protein is Probable potassium transporter 15 (HAK15).